Consider the following 255-residue polypeptide: Imidazole glycerol phosphate synthase subunit HisF (255 aa).

Catalysis depends on residues aspartate 11 and aspartate 130.

This sequence belongs to the HisA/HisF family. In terms of assembly, heterodimer of HisH and HisF.

The protein localises to the cytoplasm. The enzyme catalyses 5-[(5-phospho-1-deoxy-D-ribulos-1-ylimino)methylamino]-1-(5-phospho-beta-D-ribosyl)imidazole-4-carboxamide + L-glutamine = D-erythro-1-(imidazol-4-yl)glycerol 3-phosphate + 5-amino-1-(5-phospho-beta-D-ribosyl)imidazole-4-carboxamide + L-glutamate + H(+). It participates in amino-acid biosynthesis; L-histidine biosynthesis; L-histidine from 5-phospho-alpha-D-ribose 1-diphosphate: step 5/9. In terms of biological role, IGPS catalyzes the conversion of PRFAR and glutamine to IGP, AICAR and glutamate. The HisF subunit catalyzes the cyclization activity that produces IGP and AICAR from PRFAR using the ammonia provided by the HisH subunit. The polypeptide is Imidazole glycerol phosphate synthase subunit HisF (Campylobacter lari (strain RM2100 / D67 / ATCC BAA-1060)).